The following is a 338-amino-acid chain: uncharacterized protein (338 aa).

A Radical SAM core domain is found at 111–334; sequence HLGEERVLVP…LELAEKYNLD (224 aa). [4Fe-4S] cluster-binding residues include Cys129, Cys133, and Cys136.

[4Fe-4S] cluster is required as a cofactor.

This is an uncharacterized protein from Methanocaldococcus jannaschii (strain ATCC 43067 / DSM 2661 / JAL-1 / JCM 10045 / NBRC 100440) (Methanococcus jannaschii).